The chain runs to 82 residues: T-complex protein 1 subunit gamma (82 aa).

G15 contributes to the ADP binding site. G15 provides a ligand contact to ATP. A Mg(2+)-binding site is contributed by D66. The ADP site is built by G67, T68, T69, and S70. Positions 67, 68, and 69 each coordinate ATP.

It belongs to the TCP-1 chaperonin family. Component of the chaperonin-containing T-complex (TRiC), a hexadecamer composed of two identical back-to-back stacked rings enclosing a protein folding chamber. Each ring is made up of eight different subunits: TCP1/CCT1, CCT2, CCT3, CCT4, CCT5, CCT6A/CCT6, CCT7, CCT8. Interacts with PACRG. Interacts with DNAAF4. Interacts with DLEC1.

It localises to the cytoplasm. The enzyme catalyses ATP + H2O = ADP + phosphate + H(+). In terms of biological role, component of the chaperonin-containing T-complex (TRiC), a molecular chaperone complex that assists the folding of actin, tubulin and other proteins upon ATP hydrolysis. The TRiC complex mediates the folding of WRAP53/TCAB1, thereby regulating telomere maintenance. As part of the TRiC complex may play a role in the assembly of BBSome, a complex involved in ciliogenesis regulating transports vesicles to the cilia. This chain is T-complex protein 1 subunit gamma (CCT3), found in Sus scrofa (Pig).